The sequence spans 254 residues: Putative ankyrin-containing lipoprotein Lxx09580 (254 aa).

A signal peptide spans 1–22 (MTEIRYVRLLTLVLASSVLLAG). C23 carries the N-palmitoyl cysteine lipid modification. C23 carries S-diacylglycerol cysteine lipidation. 5 ANK repeats span residues 56 to 85 (AATA…AIED), 89 to 118 (GGRT…DVNA), 122 to 151 (IQDS…DVNA), 155 to 184 (FNGT…DLDH), and 188 to 222 (PGWT…NPDI).

The protein resides in the cell membrane. The polypeptide is Putative ankyrin-containing lipoprotein Lxx09580 (Leifsonia xyli subsp. xyli (strain CTCB07)).